Consider the following 397-residue polypeptide: Acetate kinase (397 aa).

A Mg(2+)-binding site is contributed by Asn-8. Lys-15 provides a ligand contact to ATP. Arg-89 contacts substrate. The active-site Proton donor/acceptor is Asp-146. Residues 206 to 210 (HLGNG), 281 to 283 (DLR), and 329 to 333 (GVGEN) each bind ATP. A Mg(2+)-binding site is contributed by Glu-382.

Belongs to the acetokinase family. As to quaternary structure, homodimer. It depends on Mg(2+) as a cofactor. Mn(2+) is required as a cofactor.

The protein resides in the cytoplasm. It carries out the reaction acetate + ATP = acetyl phosphate + ADP. It participates in metabolic intermediate biosynthesis; acetyl-CoA biosynthesis; acetyl-CoA from acetate: step 1/2. In terms of biological role, catalyzes the formation of acetyl phosphate from acetate and ATP. Can also catalyze the reverse reaction. The protein is Acetate kinase of Bacillus mycoides (strain KBAB4) (Bacillus weihenstephanensis).